Here is a 122-residue protein sequence, read N- to C-terminus: N(2)-fixation sustaining protein CowN (122 aa).

It belongs to the CowN family.

Functionally, is required to sustain N(2)-dependent growth in the presence of low levels of carbon monoxide (CO). Probably acts by protecting the N(2) fixation ability of the nitrogenase complex, which is inactivated in the presence of CO. This chain is N(2)-fixation sustaining protein CowN, found in Azorhizobium caulinodans (strain ATCC 43989 / DSM 5975 / JCM 20966 / LMG 6465 / NBRC 14845 / NCIMB 13405 / ORS 571).